Here is a 179-residue protein sequence, read N- to C-terminus: Large ribosomal subunit protein uL5 (179 aa).

It belongs to the universal ribosomal protein uL5 family. Part of the 50S ribosomal subunit; part of the 5S rRNA/L5/L18/L25 subcomplex. Contacts the 5S rRNA and the P site tRNA. Forms a bridge to the 30S subunit in the 70S ribosome.

Functionally, this is one of the proteins that bind and probably mediate the attachment of the 5S RNA into the large ribosomal subunit, where it forms part of the central protuberance. In the 70S ribosome it contacts protein S13 of the 30S subunit (bridge B1b), connecting the 2 subunits; this bridge is implicated in subunit movement. Contacts the P site tRNA; the 5S rRNA and some of its associated proteins might help stabilize positioning of ribosome-bound tRNAs. This is Large ribosomal subunit protein uL5 from Rickettsia felis (strain ATCC VR-1525 / URRWXCal2) (Rickettsia azadi).